Consider the following 44-residue polypeptide: Somatoliberin (44 aa).

Leu-44 carries the leucine amide modification.

This sequence belongs to the glucagon family.

It is found in the secreted. Functionally, GRF is released by the hypothalamus and acts on the adenohypophyse to stimulate the secretion of growth hormone. The chain is Somatoliberin (GHRH) from Capra hircus (Goat).